The sequence spans 160 residues: 6,7-dimethyl-8-ribityllumazine synthase (160 aa).

5-amino-6-(D-ribitylamino)uracil contacts are provided by residues Phe-22, 57–59 (TYE), and 81–83 (TII). 86–87 (QT) contributes to the (2S)-2-hydroxy-3-oxobutyl phosphate binding site. Catalysis depends on His-89, which acts as the Proton donor. Leu-114 lines the 5-amino-6-(D-ribitylamino)uracil pocket. (2S)-2-hydroxy-3-oxobutyl phosphate is bound at residue Arg-128.

It belongs to the DMRL synthase family. As to quaternary structure, forms an icosahedral capsid composed of 60 subunits, arranged as a dodecamer of pentamers.

It catalyses the reaction (2S)-2-hydroxy-3-oxobutyl phosphate + 5-amino-6-(D-ribitylamino)uracil = 6,7-dimethyl-8-(1-D-ribityl)lumazine + phosphate + 2 H2O + H(+). Its pathway is cofactor biosynthesis; riboflavin biosynthesis; riboflavin from 2-hydroxy-3-oxobutyl phosphate and 5-amino-6-(D-ribitylamino)uracil: step 1/2. Catalyzes the formation of 6,7-dimethyl-8-ribityllumazine by condensation of 5-amino-6-(D-ribitylamino)uracil with 3,4-dihydroxy-2-butanone 4-phosphate. This is the penultimate step in the biosynthesis of riboflavin. The protein is 6,7-dimethyl-8-ribityllumazine synthase of Buchnera aphidicola subsp. Acyrthosiphon pisum (strain APS) (Acyrthosiphon pisum symbiotic bacterium).